The sequence spans 152 residues: Ribosome maturation factor RimP (152 aa).

It belongs to the RimP family.

It is found in the cytoplasm. Functionally, required for maturation of 30S ribosomal subunits. The protein is Ribosome maturation factor RimP of Erwinia tasmaniensis (strain DSM 17950 / CFBP 7177 / CIP 109463 / NCPPB 4357 / Et1/99).